Reading from the N-terminus, the 346-residue chain is SUMO-activating enzyme subunit 1 (346 aa).

M1 carries the N-acetylmethionine modification. V2 bears the N-acetylvaline; in SUMO-activating enzyme subunit 1, N-terminally processed mark. At S12 the chain carries Phosphoserine. K198 is modified (N6-acetyllysine).

This sequence belongs to the ubiquitin-activating E1 family. As to quaternary structure, heterodimer of SAE1 and UBA2/SAE2. The heterodimer corresponds to the two domains that are encoded on a single polypeptide chain in ubiquitin-activating enzyme E1. Interacts with UBE2I.

Its subcellular location is the nucleus. It functions in the pathway protein modification; protein sumoylation. The heterodimer acts as an E1 ligase for SUMO1, SUMO2, SUMO3, and probably SUMO4. It mediates ATP-dependent activation of SUMO proteins followed by formation of a thioester bond between a SUMO protein and a conserved active site cysteine residue on UBA2/SAE2. This chain is SUMO-activating enzyme subunit 1 (SAE1), found in Bos taurus (Bovine).